Reading from the N-terminus, the 159-residue chain is bZIP transcription factor 11 (159 aa).

Over residues 1-21 (MESSSSGTTSSTIQTSSGSEE) the composition is skewed to low complexity. Positions 1-47 (MESSSSGTTSSTIQTSSGSEESLMEQRKRKRMLSNRESARRSRMKKQ) are disordered. The 64-residue stretch at 25-88 (EQRKRKRMLS…LTVEAENSVL (64 aa)) folds into the bZIP domain. The tract at residues 27–48 (RKRKRMLSNRESARRSRMKKQK) is basic motif. Positions 53–67 (LTAQVNHLKKENTEI) are leucine-zipper.

Forms heterodimers with BZIP1, BZIP9, BZIP10, BZIP25 and BZIP63. Interacts with ADA2B. In terms of tissue distribution, highly expressed in stems and flowers. Expressed in root tips, cotyledons, leaf vasculature, embryos, apical parts of siliques and funiculi.

Its subcellular location is the nucleus. In terms of biological role, transcription factor that binds to the DNA sequence 5'-ACTCAT-3' in target gene promoters. Promotes POX1/PRODH1 expression in response to hypoosmolarity stress. Positively regulates the expression of ASN1 and POX2/PRODH2 genes, which are involved in amino acid metabolism. Regulates several metabolic pathways such as myo-inositol, raffinose and trehalose. Regulates several trehalose metabolism genes, including TRE1, TPP5 and TPP6. Mediates recruitment of the histone acetylation machinery to activate auxin-induced transcription. Interacts with ADA2B adapter protein to promote ADA2B-mediated recruitment of SAGA-like histone acetyltransferase complexes to specific auxin-responsive genes. The polypeptide is bZIP transcription factor 11 (Arabidopsis thaliana (Mouse-ear cress)).